The following is a 912-amino-acid chain: uncharacterized protein (912 aa).

2 stretches are compositionally biased toward basic and acidic residues: residues 20–32 and 39–67; these read IERL…AEPA and HEYE…EDKT. The segment at 20 to 91 is disordered; sequence IERLREQGRA…KPTLPQPETD (72 aa). Over residues 68–77 the composition is skewed to basic residues; sequence RHKKLKHRSR.

This is an uncharacterized protein from Penicillium chrysogenum virus (isolate Caston/2003) (PcV).